The chain runs to 76 residues: MAPSVVLRSFSRLLAPARLPSCSSTRSKFYVREPVNAKPNWLAVGLSVGASVFMWIYLIQTHNEDVLEYKRRNGLE.

Residues 1–27 (MAPSVVLRSFSRLLAPARLPSCSSTRS) constitute a mitochondrion transit peptide. A helical transmembrane segment spans residues 40–59 (NWLAVGLSVGASVFMWIYLI).

It belongs to the complex I NDUFC1 subunit family. As to quaternary structure, complex I is composed of 45 different subunits.

It localises to the mitochondrion inner membrane. Accessory subunit of the mitochondrial membrane respiratory chain NADH dehydrogenase (Complex I), that is believed not to be involved in catalysis. Complex I functions in the transfer of electrons from NADH to the respiratory chain. The immediate electron acceptor for the enzyme is believed to be ubiquinone. This chain is NADH dehydrogenase [ubiquinone] 1 subunit C1, mitochondrial (Ndufc1), found in Mus musculus (Mouse).